Consider the following 104-residue polypeptide: PLAT domain-containing protein 3 (104 aa).

Residues 1 to 104 (MSLRLYDSYG…LARDASPYEL (104 aa)) form the PLAT domain.

This Arabidopsis thaliana (Mouse-ear cress) protein is PLAT domain-containing protein 3.